A 322-amino-acid polypeptide reads, in one-letter code: Tetraacyldisaccharide 4'-kinase (322 aa).

Position 54 to 61 (54 to 61 (SVGGTGKT)) interacts with ATP.

Belongs to the LpxK family.

It carries out the reaction a lipid A disaccharide + ATP = a lipid IVA + ADP + H(+). It functions in the pathway glycolipid biosynthesis; lipid IV(A) biosynthesis; lipid IV(A) from (3R)-3-hydroxytetradecanoyl-[acyl-carrier-protein] and UDP-N-acetyl-alpha-D-glucosamine: step 6/6. Transfers the gamma-phosphate of ATP to the 4'-position of a tetraacyldisaccharide 1-phosphate intermediate (termed DS-1-P) to form tetraacyldisaccharide 1,4'-bis-phosphate (lipid IVA). In Francisella philomiragia subsp. philomiragia (strain ATCC 25017 / CCUG 19701 / FSC 153 / O#319-036), this protein is Tetraacyldisaccharide 4'-kinase.